The following is a 252-amino-acid chain: Eukaryotic translation initiation factor 3 subunit J (252 aa).

Disordered stretches follow at residues 24-107 (VPAG…TPEE) and 209-232 (KQSKAKKKKKGVVPGGGLKATMKD). Positions 36 to 56 (EDEEDDVKDNWDDEEEEEEVK) are enriched in acidic residues. The span at 57–107 (EAEVKQEPKVSEKKKIAEKIKEKEKQQKKKQEELKKRLEAPEEHKELTPEE) shows a compositional bias: basic and acidic residues. Positions 65-130 (KVSEKKKIAE…ESDLELAKET (66 aa)) form a coiled coil.

Belongs to the eIF-3 subunit J family. As to quaternary structure, component of the eukaryotic translation initiation factor 3 (eIF-3) complex, which is composed of 13 subunits: EIF3A, EIF3B, EIF3C, EIF3D, EIF3E, EIF3F, EIF3G, EIF3H, EIF3I, EIF3J, EIF3K, EIF3L and EIF3M.

It localises to the cytoplasm. Component of the eukaryotic translation initiation factor 3 (eIF-3) complex, which is involved in protein synthesis of a specialized repertoire of mRNAs and, together with other initiation factors, stimulates binding of mRNA and methionyl-tRNAi to the 40S ribosome. The eIF-3 complex specifically targets and initiates translation of a subset of mRNAs involved in cell proliferation. This is Eukaryotic translation initiation factor 3 subunit J from Gallus gallus (Chicken).